Reading from the N-terminus, the 360-residue chain is Biotin synthase (360 aa).

Residues 1-25 are disordered; that stretch reads MQHAPLNFVPDAAKVPPTPGQSPNA. One can recognise a Radical SAM core domain in the interval 58 to 285; sequence NAVQLSTLLS…KAMVRLSAGR (228 aa). 3 residues coordinate [4Fe-4S] cluster: Cys-73, Cys-77, and Cys-80. The [2Fe-2S] cluster site is built by Cys-117, Cys-148, Cys-208, and Arg-280. The interval 340-360 is disordered; sequence QAEGAQHSHSSHCHIDITPAD.

Belongs to the radical SAM superfamily. Biotin synthase family. In terms of assembly, homodimer. [4Fe-4S] cluster serves as cofactor. Requires [2Fe-2S] cluster as cofactor.

It catalyses the reaction (4R,5S)-dethiobiotin + (sulfur carrier)-SH + 2 reduced [2Fe-2S]-[ferredoxin] + 2 S-adenosyl-L-methionine = (sulfur carrier)-H + biotin + 2 5'-deoxyadenosine + 2 L-methionine + 2 oxidized [2Fe-2S]-[ferredoxin]. It participates in cofactor biosynthesis; biotin biosynthesis; biotin from 7,8-diaminononanoate: step 2/2. In terms of biological role, catalyzes the conversion of dethiobiotin (DTB) to biotin by the insertion of a sulfur atom into dethiobiotin via a radical-based mechanism. The polypeptide is Biotin synthase (Ralstonia nicotianae (strain ATCC BAA-1114 / GMI1000) (Ralstonia solanacearum)).